A 338-amino-acid chain; its full sequence is HTH-type transcriptional regulator SyrM 1 (338 aa).

Positions 35 to 92 (LDLNTLLALEALLEHRNVTQAARHLGLSQPSVSRALIRLRGVFNDDLLVRGSSGMVPT) constitute an HTH lysR-type domain. Positions 52-72 (VTQAARHLGLSQPSVSRALIR) form a DNA-binding region, H-T-H motif.

Belongs to the LysR transcriptional regulatory family.

Transcriptional activator that regulates the expression of genes involved in symbiosis. Among other targets it acts on the nolWBTUV operon. This Sinorhizobium fredii (strain NBRC 101917 / NGR234) protein is HTH-type transcriptional regulator SyrM 1 (syrM1).